Here is a 131-residue protein sequence, read N- to C-terminus: NADH-quinone oxidoreductase subunit I 2 (131 aa).

2 4Fe-4S ferredoxin-type domains span residues 42-71 (LKVS…VEAG) and 81-110 (ERYE…MTGE). [4Fe-4S] cluster is bound by residues Cys51, Cys54, Cys57, Cys61, Cys90, Cys93, Cys96, and Cys100.

It belongs to the complex I 23 kDa subunit family. In terms of assembly, NDH-1 is composed of 14 different subunits. Subunits NuoA, H, J, K, L, M, N constitute the membrane sector of the complex. [4Fe-4S] cluster serves as cofactor.

The protein resides in the cell inner membrane. The enzyme catalyses a quinone + NADH + 5 H(+)(in) = a quinol + NAD(+) + 4 H(+)(out). Functionally, NDH-1 shuttles electrons from NADH, via FMN and iron-sulfur (Fe-S) centers, to quinones in the respiratory chain. The immediate electron acceptor for the enzyme in this species is believed to be ubiquinone. Couples the redox reaction to proton translocation (for every two electrons transferred, four hydrogen ions are translocated across the cytoplasmic membrane), and thus conserves the redox energy in a proton gradient. The polypeptide is NADH-quinone oxidoreductase subunit I 2 (Geobacter metallireducens (strain ATCC 53774 / DSM 7210 / GS-15)).